We begin with the raw amino-acid sequence, 149 residues long: Large ribosomal subunit protein bL9 (149 aa).

The protein belongs to the bacterial ribosomal protein bL9 family.

Functionally, binds to the 23S rRNA. This chain is Large ribosomal subunit protein bL9, found in Xanthomonas oryzae pv. oryzae (strain MAFF 311018).